Here is a 67-residue protein sequence, read N- to C-terminus: Protein AaeX (67 aa).

Helical transmembrane passes span 3 to 23 and 43 to 63; these read LFPV…KLLL and FVWH…YLIS.

It belongs to the AaeX family.

The protein localises to the cell membrane. The chain is Protein AaeX from Salmonella gallinarum (strain 287/91 / NCTC 13346).